Reading from the N-terminus, the 192-residue chain is Acetolactate synthase small subunit (192 aa).

The ACT domain maps to 29-103 (IITVKVRNEM…DTLKVSDLTD (75 aa)).

Belongs to the acetolactate synthase small subunit family. Dimer of large and small chains.

The catalysed reaction is 2 pyruvate + H(+) = (2S)-2-acetolactate + CO2. The protein operates within amino-acid biosynthesis; L-isoleucine biosynthesis; L-isoleucine from 2-oxobutanoate: step 1/4. It functions in the pathway amino-acid biosynthesis; L-valine biosynthesis; L-valine from pyruvate: step 1/4. This chain is Acetolactate synthase small subunit (ilvH), found in Aquifex aeolicus (strain VF5).